An 858-amino-acid chain; its full sequence is Myosin-K heavy chain (858 aa).

The region spanning 7 to 820 is the Myosin motor domain; the sequence is SGVDDLVLVS…TIFVMEDLLM (814 aa). 100 to 107 is a binding site for ATP; it reads GESGAGKT. The segment at 121–265 is disordered; sequence SPNNSSGGGI…GGGYGGSSKT (145 aa). Composition is skewed to gly residues over residues 126–139 and 157–182; these read SGGG…GNGG and RGMG…SRGG. Residues 183–228 show a composition bias toward pro residues; it reads GPPPTRGRGGPPPPIPQNRGAPPPVSNGGAPPPVARGPVAPPPTRG. Positions 233–245 are enriched in gly residues; that stretch reads RGGGPANRGGRGG. The actin-binding stretch occupies residues 712 to 722; it reads PHYIRCIKPND. Residues 821-858 form a tail region; the sequence is QKIDPIGYKNRVQAYKENEKLAQMKQGKHSMKQKCLIQ.

This sequence belongs to the TRAFAC class myosin-kinesin ATPase superfamily. Myosin family.

It is found in the cytoplasm. Myosins are actin-based motor molecules with ATPase activity. Involved in phagocytosis and motility, and in the maintenance and dynamics of cell cortex. This chain is Myosin-K heavy chain (myoK), found in Dictyostelium discoideum (Social amoeba).